Here is a 354-residue protein sequence, read N- to C-terminus: Methylthioribose-1-phosphate isomerase (354 aa).

Substrate-binding positions include 58 to 60, Arg-101, and Gln-204; that span reads RGA. Asp-245 serves as the catalytic Proton donor. 255-256 lines the substrate pocket; the sequence is NK.

It belongs to the eIF-2B alpha/beta/delta subunits family. MtnA subfamily.

The catalysed reaction is 5-(methylsulfanyl)-alpha-D-ribose 1-phosphate = 5-(methylsulfanyl)-D-ribulose 1-phosphate. It functions in the pathway amino-acid biosynthesis; L-methionine biosynthesis via salvage pathway; L-methionine from S-methyl-5-thio-alpha-D-ribose 1-phosphate: step 1/6. Its function is as follows. Catalyzes the interconversion of methylthioribose-1-phosphate (MTR-1-P) into methylthioribulose-1-phosphate (MTRu-1-P). This Xanthomonas euvesicatoria pv. vesicatoria (strain 85-10) (Xanthomonas campestris pv. vesicatoria) protein is Methylthioribose-1-phosphate isomerase.